The primary structure comprises 476 residues: Serine/threonine-protein kinase PknF (476 aa).

The region spanning 12–279 is the Protein kinase domain; sequence FTIVRQLGSG…FARALGHRLG (268 aa). ATP is bound by residues 18–26 and Lys-41; that span reads LGSGGMGEV. The active-site Proton acceptor is the Asp-137. Residues 306–326 form a helical membrane-spanning segment; the sequence is TAVIVPAVLAMLLVMAVAVAV. A disordered region spans residues 332-376; sequence ADDERAAQPARTRTTTSAGTTTSVAPASTTRPAPTTPTTTGAADT. Residues 338–376 are compositionally biased toward low complexity; sequence AQPARTRTTTSAGTTTSVAPASTTRPAPTTPTTTGAADT.

It belongs to the protein kinase superfamily. Ser/Thr protein kinase family. Autophosphorylated. Dephosphorylated by PstP.

Its subcellular location is the cell membrane. The enzyme catalyses L-seryl-[protein] + ATP = O-phospho-L-seryl-[protein] + ADP + H(+). The catalysed reaction is L-threonyl-[protein] + ATP = O-phospho-L-threonyl-[protein] + ADP + H(+). In terms of biological role, a serine/threonine-protein kinase, acts on HupB in vitro. The protein is Serine/threonine-protein kinase PknF of Mycobacterium tuberculosis (strain ATCC 25177 / H37Ra).